A 292-amino-acid polypeptide reads, in one-letter code: Quinolinate synthase (292 aa).

2 residues coordinate iminosuccinate: His-8 and Ser-25. Residue Cys-70 coordinates [4Fe-4S] cluster. Iminosuccinate is bound by residues 96–98 (YVN) and Ser-113. A [4Fe-4S] cluster-binding site is contributed by Cys-158. Residues 184–186 (HPE) and Thr-201 each bind iminosuccinate. Residue Cys-244 coordinates [4Fe-4S] cluster.

Belongs to the quinolinate synthase family. Type 2 subfamily. The cofactor is [4Fe-4S] cluster.

The protein localises to the cytoplasm. The catalysed reaction is iminosuccinate + dihydroxyacetone phosphate = quinolinate + phosphate + 2 H2O + H(+). The protein operates within cofactor biosynthesis; NAD(+) biosynthesis; quinolinate from iminoaspartate: step 1/1. In terms of biological role, catalyzes the condensation of iminoaspartate with dihydroxyacetone phosphate to form quinolinate. In Methanopyrus kandleri (strain AV19 / DSM 6324 / JCM 9639 / NBRC 100938), this protein is Quinolinate synthase (nadA).